We begin with the raw amino-acid sequence, 240 residues long: ATP-dependent dethiobiotin synthetase BioD (240 aa).

15 to 20 contacts ATP; it reads EIGKTF. Mg(2+) is bound at residue Thr19. Lys40 is a catalytic residue. ATP is bound by residues Asp57, 118–121, and 178–179; these read EGVG and NR. Mg(2+) contacts are provided by Asp57 and Glu118.

The protein belongs to the dethiobiotin synthetase family. As to quaternary structure, homodimer. The cofactor is Mg(2+).

The protein localises to the cytoplasm. It catalyses the reaction (7R,8S)-7,8-diammoniononanoate + CO2 + ATP = (4R,5S)-dethiobiotin + ADP + phosphate + 3 H(+). It functions in the pathway cofactor biosynthesis; biotin biosynthesis; biotin from 7,8-diaminononanoate: step 1/2. Functionally, catalyzes a mechanistically unusual reaction, the ATP-dependent insertion of CO2 between the N7 and N8 nitrogen atoms of 7,8-diaminopelargonic acid (DAPA, also called 7,8-diammoniononanoate) to form a ureido ring. The chain is ATP-dependent dethiobiotin synthetase BioD from Burkholderia pseudomallei (strain 1106a).